The sequence spans 164 residues: UBA-like domain-containing protein 2 (164 aa).

An N-acetylserine modification is found at S2. Residues 128–164 (SSPTTFHHLHRPQPTWPPGAQQGGAQQKAMAAMDGQR) form a disordered region. The span at 146–164 (GAQQGGAQQKAMAAMDGQR) shows a compositional bias: low complexity.

This sequence belongs to the UBALD family.

This Homo sapiens (Human) protein is UBA-like domain-containing protein 2 (UBALD2).